Consider the following 89-residue polypeptide: Small ribosomal subunit protein uS17 (89 aa).

This sequence belongs to the universal ribosomal protein uS17 family. Part of the 30S ribosomal subunit.

Functionally, one of the primary rRNA binding proteins, it binds specifically to the 5'-end of 16S ribosomal RNA. In Verminephrobacter eiseniae (strain EF01-2), this protein is Small ribosomal subunit protein uS17.